Reading from the N-terminus, the 326-residue chain is Ornithine carbamoyltransferase (326 aa).

Residues 54 to 57, glutamine 81, arginine 105, and 132 to 135 each bind carbamoyl phosphate; these read STRT and HPTQ. Residues asparagine 164, aspartate 225, and 229–230 each bind L-ornithine; that span reads SM. Carbamoyl phosphate-binding positions include 266 to 267 and arginine 311; that span reads CL.

This sequence belongs to the aspartate/ornithine carbamoyltransferase superfamily. OTCase family.

It is found in the cytoplasm. It carries out the reaction carbamoyl phosphate + L-ornithine = L-citrulline + phosphate + H(+). It functions in the pathway amino-acid biosynthesis; L-arginine biosynthesis; L-arginine from L-ornithine and carbamoyl phosphate: step 1/3. Functionally, reversibly catalyzes the transfer of the carbamoyl group from carbamoyl phosphate (CP) to the N(epsilon) atom of ornithine (ORN) to produce L-citrulline. This Streptococcus mutans serotype c (strain ATCC 700610 / UA159) protein is Ornithine carbamoyltransferase (argF).